Reading from the N-terminus, the 305-residue chain is Dermonecrotic toxin LiSicTox-alphaIA2aiii (305 aa).

The first 17 residues, 1–17 (LPYIALILVCWSVLSQA), serve as a signal peptide directing secretion. Residues 18–25 (AQTDVEER) constitute a propeptide that is removed on maturation. His-37 is a catalytic residue. Mg(2+) is bound by residues Glu-57 and Asp-59. His-73 serves as the catalytic Nucleophile. 2 cysteine pairs are disulfide-bonded: Cys-77–Cys-83 and Cys-79–Cys-222. Asp-117 is a Mg(2+) binding site. An N-linked (GlcNAc...) asparagine glycan is attached at Asn-282.

This sequence belongs to the arthropod phospholipase D family. Class II subfamily. Requires Mg(2+) as cofactor. In terms of tissue distribution, expressed by the venom gland.

The protein localises to the secreted. It catalyses the reaction an N-(acyl)-sphingosylphosphocholine = an N-(acyl)-sphingosyl-1,3-cyclic phosphate + choline. The catalysed reaction is an N-(acyl)-sphingosylphosphoethanolamine = an N-(acyl)-sphingosyl-1,3-cyclic phosphate + ethanolamine. It carries out the reaction a 1-acyl-sn-glycero-3-phosphocholine = a 1-acyl-sn-glycero-2,3-cyclic phosphate + choline. The enzyme catalyses a 1-acyl-sn-glycero-3-phosphoethanolamine = a 1-acyl-sn-glycero-2,3-cyclic phosphate + ethanolamine. Dermonecrotic toxins cleave the phosphodiester linkage between the phosphate and headgroup of certain phospholipids (sphingolipid and lysolipid substrates), forming an alcohol (often choline) and a cyclic phosphate. This toxin acts on sphingomyelin (SM). It may also act on ceramide phosphoethanolamine (CPE), lysophosphatidylcholine (LPC) and lysophosphatidylethanolamine (LPE), but not on lysophosphatidylserine (LPS), and lysophosphatidylglycerol (LPG). It acts by transphosphatidylation, releasing exclusively cyclic phosphate products as second products. Induces dermonecrosis, hemolysis, increased vascular permeability, edema, inflammatory response, and platelet aggregation. The protein is Dermonecrotic toxin LiSicTox-alphaIA2aiii of Loxosceles intermedia (Brown spider).